A 504-amino-acid chain; its full sequence is E3 ubiquitin-protein ligase dbl4 (504 aa).

The TRIAD supradomain stretch occupies residues histidine 127–glutamate 338. Residues cysteine 131, cysteine 134, cysteine 147, histidine 149, cysteine 152, cysteine 155, cysteine 173, cysteine 178, cysteine 217, cysteine 222, cysteine 244, cysteine 246, cysteine 251, cysteine 254, histidine 259, cysteine 264, cysteine 291, and cysteine 294 each contribute to the Zn(2+) site. An RING-type 1 zinc finger spans residues cysteine 131 to cysteine 178. Residues aspartate 197–cysteine 264 form an IBR-type zinc finger. The RING-type 2; atypical zinc-finger motif lies at cysteine 291–cysteine 320. Residue cysteine 304 is part of the active site. Zn(2+) is bound by residues cysteine 309, cysteine 312, cysteine 317, cysteine 320, histidine 327, and cysteine 334.

Belongs to the RBR family.

Its subcellular location is the cytoplasm. The protein localises to the nucleus. It carries out the reaction [E2 ubiquitin-conjugating enzyme]-S-ubiquitinyl-L-cysteine + [acceptor protein]-L-lysine = [E2 ubiquitin-conjugating enzyme]-L-cysteine + [acceptor protein]-N(6)-ubiquitinyl-L-lysine.. The protein operates within protein modification; protein ubiquitination. Functionally, probable ubiquitin-protein ligase involved in the degradation-related ubiquitination of histones. Contributes to the post-translational regulation of histone protein levels by polyubiquitination of excess histones for subsequent degradation. This Schizosaccharomyces pombe (strain 972 / ATCC 24843) (Fission yeast) protein is E3 ubiquitin-protein ligase dbl4.